A 952-amino-acid chain; its full sequence is Protein translocase subunit SecA (952 aa).

Residues Q135, 153–157, and D575 contribute to the ATP site; that span reads GEGKT. Residues 614–624 are compositionally biased toward basic and acidic residues; the sequence is RHESRRIDNQL. 2 disordered regions span residues 614-636 and 916-946; these read RHESRRIDNQLRGRSGRQGDPGS and VSAKAATQSTTPAAKEIGRNDPCPCGSGKKY. Zn(2+)-binding residues include C938, C940, C949, and C950.

It belongs to the SecA family. In terms of assembly, monomer and homodimer. Part of the essential Sec protein translocation apparatus which comprises SecA, SecYEG and auxiliary proteins SecDF. Other proteins may also be involved. Zn(2+) serves as cofactor.

It localises to the cell membrane. Its subcellular location is the cytoplasm. It carries out the reaction ATP + H2O + cellular proteinSide 1 = ADP + phosphate + cellular proteinSide 2.. Part of the Sec protein translocase complex. Interacts with the SecYEG preprotein conducting channel. Has a central role in coupling the hydrolysis of ATP to the transfer of proteins into and across the cell membrane, serving as an ATP-driven molecular motor driving the stepwise translocation of polypeptide chains across the membrane. In Dehalococcoides mccartyi (strain ATCC BAA-2100 / JCM 16839 / KCTC 5957 / BAV1), this protein is Protein translocase subunit SecA.